Reading from the N-terminus, the 888-residue chain is Glutamate receptor 3 (888 aa).

The signal sequence occupies residues 1 to 22 (MGQSVLRAVFFLVLGLLGHSHG). Residues 23-546 (GFPNTISIGG…GVFSFLDPLA (524 aa)) lie on the Extracellular side of the membrane. 5 N-linked (GlcNAc...) asparagine glycosylation sites follow: Asn-57, Asn-260, Asn-374, Asn-409, and Asn-416. Cys-85 and Cys-334 are disulfide-bonded. L-glutamate contacts are provided by Pro-502, Thr-504, and Arg-509. The chain crosses the membrane as a helical span at residues 547-567 (YEIWMCIVFAYIGVSVVLFLV). Residues 568-596 (SRFSPYEWHLEDNNEEPRDPQSPPDPPNE) are Cytoplasmic-facing. An intramembrane region (helical; Pore-forming) is located at residues 597–612 (FGIFNSLWFSLGAFMQ). The stretch at 613–615 (QGC) is an intramembrane region. The S-palmitoyl cysteine moiety is linked to residue Cys-615. Residues 616–621 (DISPRS) lie on the Cytoplasmic side of the membrane. A helical transmembrane segment spans residues 622 to 642 (LSGRIVGGVWWFFTLIIISSY). At 643–817 (TANLAAFLTV…DKTSALSLSN (175 aa)) the chain is on the extracellular side. The L-glutamate site is built by Ser-680, Thr-681, and Glu-731. A disulfide bridge connects residues Cys-744 and Cys-799. Residues 818 to 838 (VAGVFYILVGGLGLAMMVALI) form a helical membrane-spanning segment. The Cytoplasmic segment spans residues 839 to 888 (EFCYKSRAESKRMKLTKNTQNFKPAPATNTQNYATYREGYNVYGTESVKI). Cys-841 carries S-palmitoyl cysteine lipidation. Phosphotyrosine occurs at positions 871 and 881.

This sequence belongs to the glutamate-gated ion channel (TC 1.A.10.1) family. GRIA3 subfamily. In terms of assembly, homotetramer or heterotetramer of pore-forming glutamate receptor subunits. Tetramers may be formed by the dimerization of dimers. Interacts with PICK1, GRIP1 and GRIP2. Found in a complex with GRIA1, GRIA2, GRIA4, CNIH2, CNIH3, CACNG2, CACNG3, CACNG4, CACNG5, CACNG7 and CACNG8. Interacts with CACNG5. Found in a complex with GRIA1, GRIA2, GRIA4, DLG4, CACNG8 and CNIH2.

It localises to the cell membrane. The protein localises to the postsynaptic cell membrane. Its subcellular location is the postsynaptic density membrane. The enzyme catalyses Ca(2+)(in) = Ca(2+)(out). Ionotropic glutamate receptor that functions as a ligand-gated cation channel, gated by L-glutamate and glutamatergic agonists such as alpha-amino-3-hydroxy-5-methyl-4-isoxazolepropionic acid (AMPA), quisqualic acid, and kainic acid. L-glutamate acts as an excitatory neurotransmitter at many synapses in the central nervous system and plays an important role in fast excitatory synaptic transmission by inducing long-term potentiation. Binding of the excitatory neurotransmitter L-glutamate induces a conformation change, leading to the opening of the cation channel, and thereby converts the chemical signal to an electrical impulse upon entry of calcium. The receptor then desensitizes rapidly and enters a transient inactive state, characterized by the presence of bound agonist. In the presence of CACNG8, shows resensitization which is characterized by a delayed accumulation of current flux upon continued application of glutamate. This is Glutamate receptor 3 from Rattus norvegicus (Rat).